Reading from the N-terminus, the 595-residue chain is Aspartate--tRNA(Asp/Asn) ligase (595 aa).

Glu-174 is a binding site for L-aspartate. The segment at 198-201 is aspartate; that stretch reads QLFK. Arg-220 provides a ligand contact to L-aspartate. Residues 220–222 and Gln-229 each bind ATP; that span reads RDE. His-456 provides a ligand contact to L-aspartate. Residue Glu-486 participates in ATP binding. Arg-493 provides a ligand contact to L-aspartate. ATP is bound at residue 538-541; it reads GFDR.

The protein belongs to the class-II aminoacyl-tRNA synthetase family. Type 1 subfamily. Homodimer.

Its subcellular location is the cytoplasm. The enzyme catalyses tRNA(Asx) + L-aspartate + ATP = L-aspartyl-tRNA(Asx) + AMP + diphosphate. Aspartyl-tRNA synthetase with relaxed tRNA specificity since it is able to aspartylate not only its cognate tRNA(Asp) but also tRNA(Asn). Reaction proceeds in two steps: L-aspartate is first activated by ATP to form Asp-AMP and then transferred to the acceptor end of tRNA(Asp/Asn). This Gloeobacter violaceus (strain ATCC 29082 / PCC 7421) protein is Aspartate--tRNA(Asp/Asn) ligase.